The sequence spans 1022 residues: Integrator complex subunit 4 (1022 aa).

1D-myo-inositol hexakisphosphate-binding residues include T148 and K184. The disordered stretch occupies residues 818-840; it reads KDEEEKPPVVETDMPMKESVSRD.

The protein belongs to the Integrator subunit 4 family. As to quaternary structure, belongs to the multiprotein complex Integrator, at least composed of IntS1, IntS2, IntS3, IntS4, omd/IntS5, IntS6, defl/IntS7, IntS8, IntS9, IntS10, IntS11, IntS12, asun/IntS13, IntS14 and IntS15. The core complex associates with protein phosphatase 2A subunits mts/PP2A and Pp2A-29B, to form the Integrator-PP2A (INTAC) complex. IntS4 is part of the RNA endonuclease subcomplex, composed of IntS4, IntS9, IntS11 and inositol hexakisphosphate (InsP6).

It is found in the nucleus. Functionally, component of the integrator complex, a multiprotein complex that terminates RNA polymerase II (Pol II) transcription in the promoter-proximal region of genes. The integrator complex provides a quality checkpoint during transcription elongation by driving premature transcription termination of transcripts that are unfavorably configured for transcriptional elongation: the complex terminates transcription by (1) catalyzing dephosphorylation of the C-terminal domain (CTD) of Pol II subunit Polr2A/Rbp1 and Spt5, and (2) degrading the exiting nascent RNA transcript via endonuclease activity. The integrator complex is also involved in the 3'-end processing of the U7 snRNA, and also the spliceosomal snRNAs U1, U2, U4 and U5. The polypeptide is Integrator complex subunit 4 (Drosophila melanogaster (Fruit fly)).